We begin with the raw amino-acid sequence, 356 residues long: MHKVLAIETSCDETSVSIVSNSGDIYKIHSNIVASQIEDHSKWGGVVPELAARKHLELLPFVLEQALEESKIRIEKIDVIASTVTPGLVGCLRVGSITARSLCTLYSKPFLGIHHLEGHLSSILFSKNYPKPPFLTLLVSGGHTELIKVGERRKMQRLGRSYDDAAGEAFDKVGRLLGLSYPGGPAIAKIAKKGNASKFNLPKCKISDKEGGFLKYDFSFSGLKTAVLRLVEKINLNGDEIPIPDIAASFERVVAEVLVERTIKCANDYGLDNIVVVGGVAANDTLRKMMISEACKKSIKVHLAPINLCTDNAAMIGAAALYRLKFKAYESSLKLGISGRLPIDQANTLYENKPPF.

Positions 115 and 119 each coordinate Fe cation. Substrate contacts are provided by residues 138-142, D171, G184, and N283; that span reads LVSGG. D311 contacts Fe cation.

Belongs to the KAE1 / TsaD family. Fe(2+) serves as cofactor.

It localises to the cytoplasm. It catalyses the reaction L-threonylcarbamoyladenylate + adenosine(37) in tRNA = N(6)-L-threonylcarbamoyladenosine(37) in tRNA + AMP + H(+). In terms of biological role, required for the formation of a threonylcarbamoyl group on adenosine at position 37 (t(6)A37) in tRNAs that read codons beginning with adenine. Is involved in the transfer of the threonylcarbamoyl moiety of threonylcarbamoyl-AMP (TC-AMP) to the N6 group of A37, together with TsaE and TsaB. TsaD likely plays a direct catalytic role in this reaction. This is tRNA N6-adenosine threonylcarbamoyltransferase from Prochlorococcus marinus subsp. pastoris (strain CCMP1986 / NIES-2087 / MED4).